The sequence spans 271 residues: Tryptophan synthase alpha chain (271 aa).

Catalysis depends on proton acceptor residues Glu49 and Asp60.

It belongs to the TrpA family. In terms of assembly, tetramer of two alpha and two beta chains.

The enzyme catalyses (1S,2R)-1-C-(indol-3-yl)glycerol 3-phosphate + L-serine = D-glyceraldehyde 3-phosphate + L-tryptophan + H2O. The protein operates within amino-acid biosynthesis; L-tryptophan biosynthesis; L-tryptophan from chorismate: step 5/5. Functionally, the alpha subunit is responsible for the aldol cleavage of indoleglycerol phosphate to indole and glyceraldehyde 3-phosphate. The chain is Tryptophan synthase alpha chain from Burkholderia thailandensis (strain ATCC 700388 / DSM 13276 / CCUG 48851 / CIP 106301 / E264).